The primary structure comprises 283 residues: Pantothenate synthetase (283 aa).

30-37 serves as a coordination point for ATP; the sequence is MGNLHAGH. The active-site Proton donor is His37. Gln61 serves as a coordination point for (R)-pantoate. Gln61 provides a ligand contact to beta-alanine. 149–152 contributes to the ATP binding site; that stretch reads GEKD. Gln155 is a binding site for (R)-pantoate. Residues Val178 and 186 to 189 contribute to the ATP site; that span reads LSSR.

This sequence belongs to the pantothenate synthetase family. Homodimer.

It is found in the cytoplasm. The enzyme catalyses (R)-pantoate + beta-alanine + ATP = (R)-pantothenate + AMP + diphosphate + H(+). The protein operates within cofactor biosynthesis; (R)-pantothenate biosynthesis; (R)-pantothenate from (R)-pantoate and beta-alanine: step 1/1. Functionally, catalyzes the condensation of pantoate with beta-alanine in an ATP-dependent reaction via a pantoyl-adenylate intermediate. In Pseudomonas paraeruginosa (strain DSM 24068 / PA7) (Pseudomonas aeruginosa (strain PA7)), this protein is Pantothenate synthetase.